Here is a 187-residue protein sequence, read N- to C-terminus: PBAN-type neuropeptides (187 aa).

A signal peptide spans 1 to 22; the sequence is MSRFYFFFNLICLYLAIKSALS. The propeptide occupies 23–64; the sequence is AELDTNDQKYADLRTTGRGESPDSTGPDSDTLRRDDGAEGLN. Residues 34–43 are compositionally biased toward basic and acidic residues; it reads DLRTTGRGES. Residues 34–58 are disordered; that stretch reads DLRTTGRGESPDSTGPDSDTLRRDD. At leucine 76 the chain carries Leucine amide. A propeptide spanning residues 80 to 127 is cleaved from the precursor; that stretch reads TIAADLHDDLVEEFDAEPLGYAGEPPQKLATELVQGAPYMVLLVTAKP. Residues 132-163 form a disordered region; sequence PIFYHTTSPRLGRRDSVGENHQRPPFAPRLGR. Leucine amide is present on leucine 142. Residues 143-153 are compositionally biased toward basic and acidic residues; that stretch reads GRRDSVGENHQ. Leucine amide is present on residues leucine 161 and leucine 171. A propeptide spanning residues 174 to 187 is cleaved from the precursor; sequence SYNGGYPLPFQFAY.

The protein belongs to the pyrokinin family.

It localises to the secreted. A hormone that controls sex pheromone production in females and pheromone responsiveness in male. Also mediates visceral muscle contractile activity (myotropic activity). The polypeptide is PBAN-type neuropeptides (Anopheles gambiae (African malaria mosquito)).